A 455-amino-acid polypeptide reads, in one-letter code: Ectonucleoside triphosphate diphosphohydrolase 6 (455 aa).

Residues 1–12 (MRKIPNHGTLRM) lie on the Cytoplasmic side of the membrane. The chain crosses the membrane as a helical; Signal-anchor for type II membrane protein span at residues 13-32 (TKVAYPLGLCVGLFIYVAYI). Topologically, residues 33–455 (KWHRASAAQA…SLKRQKVPAL (423 aa)) are lumenal. A glycan (N-linked (GlcNAc...) asparagine) is linked at asparagine 192. The active-site Proton acceptor is glutamate 196. A glycan (N-linked (GlcNAc...) asparagine) is linked at asparagine 256. Cystine bridges form between cysteine 297–cysteine 327 and cysteine 387–cysteine 401.

The protein belongs to the GDA1/CD39 NTPase family. Ca(2+) serves as cofactor. Mg(2+) is required as a cofactor. Post-translationally, might be cleaved at the N-terminus, retained in an intracellular membrane compartment and in addition be released into the extracellular medium. In terms of processing, N-glycosylated. In terms of tissue distribution, expressed in heart and brain.

It localises to the golgi apparatus membrane. Its subcellular location is the secreted. It is found in the cell membrane. It catalyses the reaction a ribonucleoside 5'-diphosphate + H2O = a ribonucleoside 5'-phosphate + phosphate + H(+). The catalysed reaction is IDP + H2O = IMP + phosphate + H(+). It carries out the reaction GDP + H2O = GMP + phosphate + H(+). The enzyme catalyses UDP + H2O = UMP + phosphate + H(+). In terms of biological role, catalyzes the hydrolysis of nucleoside triphosphates and diphosphates in a calcium- or magnesium-dependent manner. Has a strong preference for nucleoside diphosphates, preferentially hydrolyzes GDP, IDP, and UDP, with slower hydrolysis of CDP, ITP, GTP, CTP, ADP, and UTP and virtually no hydrolysis of ATP. The membrane bound form might support glycosylation reactions in the Golgi apparatus and, when released from cells, might catalyze the hydrolysis of extracellular nucleotides. This Rattus norvegicus (Rat) protein is Ectonucleoside triphosphate diphosphohydrolase 6 (Entpd6).